The following is a 255-amino-acid chain: Thiazole synthase (255 aa).

Lys96 acts as the Schiff-base intermediate with DXP in catalysis. 1-deoxy-D-xylulose 5-phosphate is bound by residues Gly157, 183 to 184 (AG), and 205 to 206 (NT).

This sequence belongs to the ThiG family. As to quaternary structure, homotetramer. Forms heterodimers with either ThiH or ThiS.

It is found in the cytoplasm. The catalysed reaction is [ThiS sulfur-carrier protein]-C-terminal-Gly-aminoethanethioate + 2-iminoacetate + 1-deoxy-D-xylulose 5-phosphate = [ThiS sulfur-carrier protein]-C-terminal Gly-Gly + 2-[(2R,5Z)-2-carboxy-4-methylthiazol-5(2H)-ylidene]ethyl phosphate + 2 H2O + H(+). The protein operates within cofactor biosynthesis; thiamine diphosphate biosynthesis. Its function is as follows. Catalyzes the rearrangement of 1-deoxy-D-xylulose 5-phosphate (DXP) to produce the thiazole phosphate moiety of thiamine. Sulfur is provided by the thiocarboxylate moiety of the carrier protein ThiS. In vitro, sulfur can be provided by H(2)S. This is Thiazole synthase from Heliobacterium modesticaldum (strain ATCC 51547 / Ice1).